The sequence spans 214 residues: Thymidylate kinase (214 aa).

10-17 serves as a coordination point for ATP; that stretch reads GPDGAGKT.

It belongs to the thymidylate kinase family.

It carries out the reaction dTMP + ATP = dTDP + ADP. Functionally, phosphorylation of dTMP to form dTDP in both de novo and salvage pathways of dTTP synthesis. The polypeptide is Thymidylate kinase (Limosilactobacillus fermentum (strain NBRC 3956 / LMG 18251) (Lactobacillus fermentum)).